The primary structure comprises 181 residues: Probable pyruvoyl-dependent arginine decarboxylase (181 aa).

Ser43 is subject to Pyruvic acid (Ser).

This sequence belongs to the PdaD family. Pyruvate serves as cofactor.

It carries out the reaction L-arginine + H(+) = agmatine + CO2. This is Probable pyruvoyl-dependent arginine decarboxylase from Chlorobium phaeobacteroides (strain BS1).